Consider the following 1456-residue polypeptide: Macrophage mannose receptor 1 (1456 aa).

The N-terminal stretch at 1–19 is a signal peptide; it reads MRLLLLLAFISVIPVSVQL. Over 20–1388 the chain is Extracellular; sequence LDARQFLIYN…DPQPKGSSKA (1369 aa). A Ricin B-type lectin domain is found at 22–142; sequence ARQFLIYNED…SGLWSRWKVY (121 aa). Intrachain disulfides connect cysteine 35-cysteine 49, cysteine 74-cysteine 91, cysteine 102-cysteine 149, cysteine 168-cysteine 194, cysteine 182-cysteine 209, cysteine 247-cysteine 340, and cysteine 316-cysteine 332. N-linked (GlcNAc...) asparagine glycosylation occurs at asparagine 104. Residues 163 to 211 form the Fibronectin type-II domain; sequence ANGAVCAFPFKFENKWYADCTSAGRSDGWLWCGTTTDYDKDKLFGFCPL. Residues 225 to 341 form the C-type lectin 1 domain; sequence LTGILYQINS…CVQKLGYICK (117 aa). An N-linked (GlcNAc...) asparagine glycan is attached at asparagine 344. 4 consecutive C-type lectin domains span residues 369 to 487, 511 to 626, 655 to 778, and 807 to 923; these read YAGH…YICK, HGFY…FVCK, KTSM…WICQ, and YKDY…FICQ. 2 cysteine pairs are disulfide-bonded: cysteine 391–cysteine 486 and cysteine 463–cysteine 478. Asparagine 529 carries N-linked (GlcNAc...) asparagine glycosylation. 6 disulfides stabilise this stretch: cysteine 532-cysteine 625, cysteine 600-cysteine 617, cysteine 680-cysteine 777, cysteine 753-cysteine 769, cysteine 828-cysteine 922, and cysteine 899-cysteine 914. N-linked (GlcNAc...) asparagine glycans are attached at residues asparagine 926 and asparagine 930. C-type lectin domains follow at residues 951–1079, 1101–1212, and 1240–1355; these read YKNK…YICQ, YGKS…FLCK, and FYGH…FICK. 6 disulfide bridges follow: cysteine 976–cysteine 1078, cysteine 1051–cysteine 1070, cysteine 1122–cysteine 1211, cysteine 1189–cysteine 1203, cysteine 1262–cysteine 1354, and cysteine 1331–cysteine 1346. Asparagine 1159 carries N-linked (GlcNAc...) asparagine glycosylation. N-linked (GlcNAc...) asparagine glycosylation is present at asparagine 1204. Residues 1389 to 1409 form a helical membrane-spanning segment; it reads AGVVTVVLLIVIGAGVAAYFF. Residues 1410 to 1456 lie on the Cytoplasmic side of the membrane; sequence YKKRHALHIPQEATFENTLYFNSNLSPGTSDTKDLMGNIEQNEHAII.

Detected in macrophages.

It is found in the endosome membrane. It localises to the cell membrane. In terms of biological role, mediates the endocytosis of glycoproteins by macrophages. Binds both sulfated and non-sulfated polysaccharide chains. Acts as phagocytic receptor for bacteria, fungi and other pathogens. In Mus musculus (Mouse), this protein is Macrophage mannose receptor 1 (Mrc1).